A 420-amino-acid chain; its full sequence is MNIYYKNFKKYDTKIYNIIKKEIIRQEEHIELIASENYASKYVMQMQGSLLTNKYAEGYPKNRYYRGCKYIDEIEDLAIKRAKKLFNVDYVNVQPHSGSQANFAVYSALLNPGDLVLGMKLNHGGHLTHGSKANFSGKMYKFISYGVNGEGKLDYNKLLNLANYYRPKMIVGGFSSYSGFINWKKMRFISDKVGAYLFADISHVAGLIVAGIYPNAIPYAHVVTTTTHKTLSGPRGGLILAKEGDDEFYKKLDSAVFPGTQGGPLMHIIAAKAVAFKEAMTLKFKKYQHQLVKNSKSMVEIFLKRKFHVVSGGTKNHLFILNLSNIGLKGDLASEILEKANITVNKNSIPNDKLNPKITSGIRIGTPAITKRGFKEIESKKVAEWICDILENINDKKLINNIKIKVINLCYKYPVYKSFK.

Residues leucine 121 and 125 to 127 (GHL) each bind (6S)-5,6,7,8-tetrahydrofolate. N6-(pyridoxal phosphate)lysine is present on lysine 229.

It belongs to the SHMT family. In terms of assembly, homodimer. Pyridoxal 5'-phosphate serves as cofactor.

Its subcellular location is the cytoplasm. The catalysed reaction is (6R)-5,10-methylene-5,6,7,8-tetrahydrofolate + glycine + H2O = (6S)-5,6,7,8-tetrahydrofolate + L-serine. It participates in one-carbon metabolism; tetrahydrofolate interconversion. The protein operates within amino-acid biosynthesis; glycine biosynthesis; glycine from L-serine: step 1/1. Its function is as follows. Catalyzes the reversible interconversion of serine and glycine with tetrahydrofolate (THF) serving as the one-carbon carrier. This reaction serves as the major source of one-carbon groups required for the biosynthesis of purines, thymidylate, methionine, and other important biomolecules. Also exhibits THF-independent aldolase activity toward beta-hydroxyamino acids, producing glycine and aldehydes, via a retro-aldol mechanism. The protein is Serine hydroxymethyltransferase of Wigglesworthia glossinidia brevipalpis.